Reading from the N-terminus, the 311-residue chain is MNRTRSASMVQGGLNWDSLPLKLFAGGNAKFWNPADIDFSRDRADWERLTDDERSYATRLCAEFIAGEESVTQDIQPFMAAMRAEGRLGDEMYLTQFAFEEAKHVQVFRMWLDAVGVTDDLHHFLDDVPSYRTIFYEELPDCLNALTIDPSPAAQVRASVTYNHMVEGMLALTGYFGWHKICVERGILPGMQELVRRIGDDERRHMAWGTFTCRRHVAADDANWGVFETRMNELMPLGLRLIEEGFALYDPMPFDLSVDEFMAYASDKGMRRFGTIASARGRPLAEIDLDYTPVQLEDTFADEDARALAAV.

Mn(2+)-binding residues include E68, E101, and H104. Positions 71 to 162 (VTQDIQPFMA…AAQVRASVTY (92 aa)) form a cross-link, 3-(O4'-tyrosyl)-valine (Val-Tyr). E101 lines the Fe cation pocket. Residues E167, E202, and H205 each coordinate Fe cation.

It belongs to the ribonucleoside diphosphate reductase small chain family. R2-like ligand binding oxidase subfamily. In terms of assembly, homodimer. Requires Fe cation as cofactor. Mn(2+) is required as a cofactor.

Functionally, probable oxidase that might be involved in lipid metabolism. This Mycobacterium avium (strain 104) protein is R2-like ligand binding oxidase.